The sequence spans 446 residues: Mycosin-1 (446 aa).

The first 21 residues, 1–21 (MHRIFLITVALALLTASPASA), serve as a signal peptide directing secretion. Residues 24 to 43 (PPPIDPGALPPDVTGPDQPT) are disordered. The region spanning 64-387 (PWSNTYLGVA…AGVIDAVAAL (324 aa)) is the Peptidase S8 domain. Residues aspartate 90, histidine 121, and serine 332 each act as charge relay system in the active site. Residues 419–439 (ITAVALVAVGLTLALGLGALA) traverse the membrane as a helical segment.

This sequence belongs to the peptidase S8 family.

It is found in the cell membrane. Functionally, may play a dual role in regulation of ESX-1 secretion and virulence. Acts as a protease that cleaves EspB. Essential for ESX-1 function, required for early replication in macrophages and full virulence in mice. The chain is Mycosin-1 from Mycobacterium tuberculosis (strain ATCC 25618 / H37Rv).